The sequence spans 226 residues: Ribonuclease S-7 (226 aa).

The N-terminal stretch at 1-27 (MGITGMIYIVTMVFSLIVLILSSSTVG) is a signal peptide. Residue Gln-36 coordinates RNA. Cys-42 and Cys-49 are joined by a disulfide. His-60 contacts RNA. Catalysis depends on His-60, which acts as the Proton donor. N-linked (GlcNAc...) asparagine; alternate glycosylation is found at Asn-74 and Asn-77. The cysteines at positions 75 and 119 are disulfide-linked. Residues 98–99 (NV), Phe-108, 111–112 (KQ), and 115–116 (KH) each bind RNA. Residue Gln-112 is part of the active site. Catalysis depends on His-116, which acts as the Proton acceptor. Residues Asn-126, Asn-144, and Asn-172 are each glycosylated (N-linked (GlcNAc...) asparagine). Cystine bridges form between Cys-183–Cys-220 and Cys-198–Cys-209.

This sequence belongs to the RNase T2 family. Post-translationally, the N-glycans attached at Asn-74 and Asn-77 consist of either monosaccharide (GlcNAc) or disaccharide (GlcNAc-GlcNAc) that could not be distinguished. The N-glycan at Asn-144 contains mannose and xylose, and at Asn-126 contains mannose, xylose and fucose. The N-glycan at Asn-172 consists of disaccharide (GlcNAc-GlcNAc).

It carries out the reaction a ribonucleotidyl-ribonucleotide-RNA + H2O = a 3'-end 3'-phospho-ribonucleotide-RNA + a 5'-end dephospho-ribonucleoside-RNA + H(+). Functionally, self-incompatibility (SI) is the inherited ability of a flowering plant to prevent self-fertilization by discriminating between self and non-self pollen during pollination. In many species, self-incompatibility is controlled by the single, multiallelic locus S. The protein is Ribonuclease S-7 of Pyrus pyrifolia (Chinese pear).